Reading from the N-terminus, the 477-residue chain is Zinc finger C3HC-type protein 1-like (477 aa).

The segment at 95–149 adopts a C3HC-type zinc-finger fold; sequence CAKYGWCNIECDMLKCSSCNAYLCASLQPILDFSKYKQRCVELQEALRKAHEKFC. Positions 287 to 392 are disordered; it reads SLSAPGTPVS…SSSSDTSPRS (106 aa). The segment covering 354 to 363 has biased composition (polar residues); sequence SMGQGENTGL. Residues 370–379 are compositionally biased toward basic residues; it reads SPHRRAKRPR. Positions 382 to 392 are enriched in low complexity; sequence SSSSSDTSPRS.

Post-translationally, phosphorylated. May also be weakly phosphorylated on Tyr residues.

It is found in the nucleus. Its subcellular location is the nucleus envelope. In terms of biological role, required for proper positioning of a substantial amount of TPR at the nuclear basket (NB) through interaction with TPR. The protein is Zinc finger C3HC-type protein 1-like (zc3hc1) of Xenopus laevis (African clawed frog).